Consider the following 216-residue polypeptide: MSCLPALDKFLQNYHQAYLTSLGELLRYYPQGEASVCIQGEFHADLDQAVSWQPVKREVEGSFANVEHALELTLWPEINHFYGQYFSAPLLFDSEWGTGELLQVWNEDDFTCLQQNLIGHLMMKKKLKQPPTWFIGLLDEGDKMLTINNSDGSVWIELPGEIPTQQLSPSLAEFIGALSPRIAPPVKHEELPMPALEHPGIFASFKRMWQNLFGKR.

It belongs to the Syd family.

It is found in the cell inner membrane. Interacts with the SecY protein in vivo. May bind preferentially to an uncomplexed state of SecY, thus functioning either as a chelating agent for excess SecY in the cell or as a regulatory factor that negatively controls the translocase function. The chain is Protein Syd from Shewanella baltica (strain OS185).